We begin with the raw amino-acid sequence, 588 residues long: DNA ligase (588 aa).

Glu-250 provides a ligand contact to ATP. The active-site N6-AMP-lysine intermediate is the Lys-252. Positions 257, 272, 302, 342, 417, and 423 each coordinate ATP.

This sequence belongs to the ATP-dependent DNA ligase family. Mg(2+) serves as cofactor.

The catalysed reaction is ATP + (deoxyribonucleotide)n-3'-hydroxyl + 5'-phospho-(deoxyribonucleotide)m = (deoxyribonucleotide)n+m + AMP + diphosphate.. Its function is as follows. DNA ligase that seals nicks in double-stranded DNA during DNA replication, DNA recombination and DNA repair. The chain is DNA ligase from Nitrosopumilus maritimus (strain SCM1).